The chain runs to 347 residues: DnaJ homolog subfamily C member 22 (347 aa).

Residues Gly-4 to Trp-50 enclose the TM2 domain. Transmembrane regions (helical) follow at residues Leu-5 to Leu-25, Leu-32 to Leu-52, Phe-81 to Phe-101, Phe-105 to Gly-125, Leu-135 to Ile-155, Gly-186 to Val-206, and Phe-218 to Leu-238. A J domain is found at Leu-277–Phe-347.

The protein localises to the membrane. In terms of biological role, may function as a co-chaperone. The chain is DnaJ homolog subfamily C member 22 (DNAJC22) from Bos taurus (Bovine).